We begin with the raw amino-acid sequence, 222 residues long: uncharacterized protein (222 aa).

4 helical membrane-spanning segments follow: residues 23 to 43 (FFAA…TGLL), 67 to 87 (IWVL…IGYL), 157 to 177 (IVGG…LGNV), and 187 to 207 (IILG…WHGY).

This sequence belongs to the DedA family.

The protein resides in the cell membrane. This is an uncharacterized protein from Mycobacterium leprae (strain TN).